Here is a 340-residue protein sequence, read N- to C-terminus: Protein-arginine kinase (340 aa).

The Phosphagen kinase C-terminal domain occupies 21-242; sequence VVLSSRIRLA…EQIIMQERVA (222 aa). ATP is bound by residues 24 to 28, H79, R113, 164 to 168, and 195 to 200; these read SSRIR, RASVM, and RGIYGE.

This sequence belongs to the ATP:guanido phosphotransferase family.

The catalysed reaction is L-arginyl-[protein] + ATP = N(omega)-phospho-L-arginyl-[protein] + ADP + H(+). Catalyzes the specific phosphorylation of arginine residues in proteins. The polypeptide is Protein-arginine kinase (Listeria monocytogenes serotype 4b (strain CLIP80459)).